We begin with the raw amino-acid sequence, 791 residues long: von Willebrand factor A domain-containing protein 2 (791 aa).

The first 23 residues, 1 to 23 (MPPLLLLPAIYMLLFFRVSPTIS), serve as a signal peptide directing secretion. Positions 51-221 (DILFLLDGSH…DATNGLLSTL (171 aa)) constitute a VWFA 1 domain. Asparagine 146 is a glycosylation site (N-linked (GlcNAc...) asparagine). The EGF-like 1 domain maps to 295 to 332 (PGPCDSQPCQNGGTCIPEGVDRYHCLCPLAFGGEVNCA). Intrachain disulfides connect cysteine 298-cysteine 309, cysteine 303-cysteine 319, and cysteine 321-cysteine 331. VWFA domains follow at residues 342-516 (DVLF…QRRL) and 530-704 (DLVF…IEWL). In terms of domain architecture, EGF-like 2 spans 711–747 (PVNLCKPSPCMNEGTCVLKNGSYRCECRGGWEGPHCE). Cystine bridges form between cysteine 715-cysteine 726, cysteine 720-cysteine 735, and cysteine 737-cysteine 746. Positions 762–791 (HQEPAGLQGPTPSQQAPKHLRIGKALSSAK) are disordered.

As to quaternary structure, forms monomers and multimers. In terms of tissue distribution, detected in uterus, kidney, and skin. Also detected in intestine and lung of adult mice, and in calvaria, femur, brain, heart, intestine, skeletal muscle, and lung of newborn mice.

The protein localises to the secreted. The polypeptide is von Willebrand factor A domain-containing protein 2 (Vwa2) (Mus musculus (Mouse)).